We begin with the raw amino-acid sequence, 432 residues long: uncharacterized protein (432 aa).

This is an uncharacterized protein from Methanocaldococcus jannaschii (strain ATCC 43067 / DSM 2661 / JAL-1 / JCM 10045 / NBRC 100440) (Methanococcus jannaschii).